A 325-amino-acid polypeptide reads, in one-letter code: Protein FAM50B (325 aa).

Ala2 carries the post-translational modification N-acetylalanine. Disordered stretches follow at residues Gln92 to Arg111 and Arg137 to Glu160.

It belongs to the FAM50 family. Widely expressed. Mostly abundant in testis and adult and fetal brain.

This chain is Protein FAM50B (FAM50B), found in Homo sapiens (Human).